Here is a 301-residue protein sequence, read N- to C-terminus: MKHFLSIKELTQQQLLDLITLAKTIKANPAEYRHALDGKSVVMLFEKPSLRTRVSFDIGINKFGGHCLYLDQQNGALGKRESVADFASNLSCWADAIVARTYSHTTIEQLAEFGTVPVINALSDLYHPCQALADFLTLAEHFENISDVKLAYVGDGNNVTNSLMYCAAILGATMTVICPAGHFPDGYVVAEVQELASRYGGKIVLTSDIDAIEGHDAIYTDTWISMGDPTPLAEIKDKFAPYQVNNALMAKAGAHFFMHCLPAHRGVEVTDAVMDGECSLILQQAENRMHAQNAVLVTLFS.

Carbamoyl phosphate is bound by residues arginine 100 and 127–130 (HPCQ). L-ornithine contacts are provided by residues asparagine 158, aspartate 221, and 225 to 226 (SM). Carbamoyl phosphate contacts are provided by residues 260–261 (CL) and arginine 288.

Belongs to the aspartate/ornithine carbamoyltransferase superfamily. OTCase family.

Its subcellular location is the cytoplasm. It carries out the reaction carbamoyl phosphate + L-ornithine = L-citrulline + phosphate + H(+). It participates in amino-acid biosynthesis; L-arginine biosynthesis; L-arginine from L-ornithine and carbamoyl phosphate: step 1/3. Functionally, reversibly catalyzes the transfer of the carbamoyl group from carbamoyl phosphate (CP) to the N(epsilon) atom of ornithine (ORN) to produce L-citrulline. The polypeptide is Ornithine carbamoyltransferase (Shewanella oneidensis (strain ATCC 700550 / JCM 31522 / CIP 106686 / LMG 19005 / NCIMB 14063 / MR-1)).